The following is a 152-amino-acid chain: MQKLLLAVLFFSLLAVATARPKYHKQGRRKGDACRLNCIFDNVVCEIPCKLLFRSRSKYIDCVLPCRRDRVDCYIHCNHFDATPKTEAEPGSLDKGEGTKGEKGKEGKKEKGEYAIGNAESGNGSSGGSNKTHDDDDDDRDDVHENDDENED.

Residues 1–19 form the signal peptide; it reads MQKLLLAVLFFSLLAVATA. The segment covering 82–113 has biased composition (basic and acidic residues); it reads ATPKTEAEPGSLDKGEGTKGEKGKEGKKEKGE. The tract at residues 82–152 is disordered; it reads ATPKTEAEPG…VHENDDENED (71 aa). The span at 135–152 shows a compositional bias: acidic residues; that stretch reads DDDDDRDDVHENDDENED.

In terms of tissue distribution, prismatic layer of shell (at protein level). Expressed primarily in the mantle with highest level in the mantle edge and lower level in the mantle pallium.

The protein resides in the secreted. The chain is Aspartate-rich protein from Margaritifera margaritifera (Freshwater pearl mussel).